Consider the following 154-residue polypeptide: 6,7-dimethyl-8-ribityllumazine synthase (154 aa).

Residues phenylalanine 23, 57 to 59 (AFE), and 81 to 83 (AVI) each bind 5-amino-6-(D-ribitylamino)uracil. Position 86–87 (86–87 (ST)) interacts with (2S)-2-hydroxy-3-oxobutyl phosphate. Histidine 89 (proton donor) is an active-site residue. Phenylalanine 114 is a 5-amino-6-(D-ribitylamino)uracil binding site. Residue arginine 128 coordinates (2S)-2-hydroxy-3-oxobutyl phosphate.

It belongs to the DMRL synthase family.

It carries out the reaction (2S)-2-hydroxy-3-oxobutyl phosphate + 5-amino-6-(D-ribitylamino)uracil = 6,7-dimethyl-8-(1-D-ribityl)lumazine + phosphate + 2 H2O + H(+). It functions in the pathway cofactor biosynthesis; riboflavin biosynthesis; riboflavin from 2-hydroxy-3-oxobutyl phosphate and 5-amino-6-(D-ribitylamino)uracil: step 1/2. Functionally, catalyzes the formation of 6,7-dimethyl-8-ribityllumazine by condensation of 5-amino-6-(D-ribitylamino)uracil with 3,4-dihydroxy-2-butanone 4-phosphate. This is the penultimate step in the biosynthesis of riboflavin. In Syntrophotalea carbinolica (strain DSM 2380 / NBRC 103641 / GraBd1) (Pelobacter carbinolicus), this protein is 6,7-dimethyl-8-ribityllumazine synthase.